The following is a 117-amino-acid chain: Cell division protein FtsB (117 aa).

At 1–6 the chain is on the cytoplasmic side; the sequence is MRDWRW. A helical membrane pass occupies residues 7–24; that stretch reads MLLVLALLLGWLQYRFWF. Over 25–117 the chain is Periplasmic; sequence GPGNSGEVMM…QVGDHPADVP (93 aa). Residues 29–69 are a coiled coil; it reads SGEVMMLEAQVANQERDNEGLQQRNDALAAEVKDLKEGQSA.

It belongs to the FtsB family. Part of a complex composed of FtsB, FtsL and FtsQ.

It is found in the cell inner membrane. In terms of biological role, essential cell division protein. May link together the upstream cell division proteins, which are predominantly cytoplasmic, with the downstream cell division proteins, which are predominantly periplasmic. The polypeptide is Cell division protein FtsB (Stenotrophomonas maltophilia (strain K279a)).